Here is a 186-residue protein sequence, read N- to C-terminus: Elongation factor P (186 aa).

It belongs to the elongation factor P family.

The protein localises to the cytoplasm. The protein operates within protein biosynthesis; polypeptide chain elongation. In terms of biological role, involved in peptide bond synthesis. Stimulates efficient translation and peptide-bond synthesis on native or reconstituted 70S ribosomes in vitro. Probably functions indirectly by altering the affinity of the ribosome for aminoacyl-tRNA, thus increasing their reactivity as acceptors for peptidyl transferase. This Shewanella loihica (strain ATCC BAA-1088 / PV-4) protein is Elongation factor P.